The sequence spans 385 residues: Prepilin peptidase EppA (385 aa).

10 helical membrane passes run 1–21, 29–49, 58–78, 80–100, 104–124, 126–146, 166–186, 187–207, 231–251, and 358–378; these read MILMVIELLSVFIALLACFYA, GIIPNRLTFPVIGLGLLLNGA, WIFIYTAIFTAGIFALGYILW, MVAWAGGDVKLFTAVTSLLPF, LVSYSFLGTAFPVTASYPFPL, VIINSILALLPFLLVYVFFII, TSMVLALVITSAVTLTFLITD, FLPFQIIVLSLILVYLLTMVI, FELTVSGVVILWVSITVIQLI, and PAIFIGLLVSLLIGDLAMILF.

The protein belongs to the peptidase A24 family.

The protein localises to the cell membrane. In terms of biological role, peptidase that processes the N-terminus of prepilins. The protein is Prepilin peptidase EppA of Methanothermobacter thermautotrophicus (strain ATCC 29096 / DSM 1053 / JCM 10044 / NBRC 100330 / Delta H) (Methanobacterium thermoautotrophicum).